The primary structure comprises 455 residues: Mitochondrial inner membrane magnesium transporter LPE10 (455 aa).

A mitochondrion-targeting transit peptide spans 1 to 56; sequence MHIKISTDFAIQNLHCTTMIRPLLRLCGQRTAATPFVSFFRPPKKPLSGISFARHY. Helical transmembrane passes span 365-385 and 396-416; these read FQIG…YGMN and GFLG…AHFL. The YGMN signature appears at 382 to 385; the sequence is YGMN. A compositionally biased stretch (basic and acidic residues) spans 433–444; the sequence is KAMKKKDTVAEK. A disordered region spans residues 433–455; it reads KAMKKKDTVAEKRRNHLRNWLTK.

The protein belongs to the CorA metal ion transporter (MIT) (TC 1.A.35) family. As to quaternary structure, forms homooligomers. Interacts with MRS2.

It is found in the mitochondrion inner membrane. In terms of biological role, mitochondrial inner membrane magnesium transporter required for mitochondrial magnesium homeostasis. Modulates the conductance of the MRS2 channel. Involved in the splicing of mRNA group II introns in mitochondria by affecting mitochondrial magnesium concentrations, which are critical for group II intron splicing. This is Mitochondrial inner membrane magnesium transporter LPE10 (LPE10) from Yarrowia lipolytica (strain CLIB 122 / E 150) (Yeast).